A 567-amino-acid chain; its full sequence is Urease subunit alpha (567 aa).

The 439-residue stretch at 129–567 (GGIDTHIHWI…LPMAQRYFLF (439 aa)) folds into the Urease domain. The Ni(2+) site is built by H134, H136, and K217. K217 bears the N6-carboxylysine mark. H219 contributes to the substrate binding site. 2 residues coordinate Ni(2+): H246 and H272. H320 functions as the Proton donor in the catalytic mechanism. Position 360 (D360) interacts with Ni(2+).

This sequence belongs to the metallo-dependent hydrolases superfamily. Urease alpha subunit family. In terms of assembly, heterotrimer of UreA (gamma), UreB (beta) and UreC (alpha) subunits. Three heterotrimers associate to form the active enzyme. Ni cation serves as cofactor. Post-translationally, carboxylation allows a single lysine to coordinate two nickel ions.

The protein localises to the cytoplasm. It catalyses the reaction urea + 2 H2O + H(+) = hydrogencarbonate + 2 NH4(+). The protein operates within nitrogen metabolism; urea degradation; CO(2) and NH(3) from urea (urease route): step 1/1. The protein is Urease subunit alpha of Enterobacter sp. (strain 638).